Consider the following 117-residue polypeptide: Immunoglobulin kappa variable 1-5 (117 aa).

An N-terminal signal peptide occupies residues 1 to 22 (MDMRVPAQLLGLLLLWLPGAKC). The interval 23–45 (DIQMTQSPSTLSASVGDRVTITC) is framework-1. The Ig-like domain maps to 24–117 (IQMTQSPSTL…YYCQQYNSYS (94 aa)). An intrachain disulfide couples cysteine 45 to cysteine 110. Residues 46 to 56 (RASQSISSWLA) form a complementarity-determining-1 region. Positions 57 to 71 (WYQQKPGKAPKLLIY) are framework-2. Positions 72–78 (KASSLES) are complementarity-determining-2. The segment at 79-110 (GVPSRFSGSGSGTEFTLTISSLQPDDFATYYC) is framework-3. The tract at residues 111 to 117 (QQYNSYS) is complementarity-determining-3.

In terms of assembly, immunoglobulins are composed of two identical heavy chains and two identical light chains; disulfide-linked.

The protein resides in the secreted. Its subcellular location is the cell membrane. V region of the variable domain of immunoglobulin light chains that participates in the antigen recognition. Immunoglobulins, also known as antibodies, are membrane-bound or secreted glycoproteins produced by B lymphocytes. In the recognition phase of humoral immunity, the membrane-bound immunoglobulins serve as receptors which, upon binding of a specific antigen, trigger the clonal expansion and differentiation of B lymphocytes into immunoglobulins-secreting plasma cells. Secreted immunoglobulins mediate the effector phase of humoral immunity, which results in the elimination of bound antigens. The antigen binding site is formed by the variable domain of one heavy chain, together with that of its associated light chain. Thus, each immunoglobulin has two antigen binding sites with remarkable affinity for a particular antigen. The variable domains are assembled by a process called V-(D)-J rearrangement and can then be subjected to somatic hypermutations which, after exposure to antigen and selection, allow affinity maturation for a particular antigen. The protein is Immunoglobulin kappa variable 1-5 of Homo sapiens (Human).